The chain runs to 694 residues: MSQSKQASILDSRILVPAIADAFKKLNPRTLARNPVMFVVATVSVLTTVLFIRDLITGGANLAFSFQINLWLWFTVLFANFAEAVAEGRGKAQADSLRKTRTETQAKLLNSDDRSQYKMVAGDSLKVNDVVLVEAGDIIPSDGEVIEGVASVNEAAITGESAPVIRESGGDRSAVTGGTQVLSDWIRVRITAAAGSTFLDRMISLVEGAERQKTPNEIALNILLAGMTLIFVLATATIPSFAAYAGGSIPIIVLVALFVTLIPTTIGALLSAIGIAGMDRLVRFNVLAMSGRAVEAAGDVDTLLLDKTGTITLGNRQATDLRPIPGVSEQELADAAQLASLADETPEGRSIVVLAKEKYGIRARDMQKLHATFVPFTAQTRMSGVDFEGASIRKGAVDAVLAYVDGGALQHGNAALALKTETDATRAIRAIAEDIAKAGGTPLAVVRDGKLLGVVQLKDIVKGGIRERFAELRRMGIRTVMITGDNPMTAAAIAAEAGVDDFLAQATPENKLELIREEQAKGKLVAMCGDGTNDAPALAQADVGVAMNTGTVAAREAGNMVDLDSDPTKLIEIVEIGKQLLMTRGALTTFSIANDIAKYFAIIPAMFLALYPQLGVLNVMGLSTPQSAILSAIIFNALIIIALIPLSLKGVKYRPIGAGALLSRNLVIYGLGGIIVPFIGIKLIDLAVTALGLA.

4 consecutive transmembrane segments (helical) span residues 36–56 (VMFV…RDLI), 62–82 (LAFS…ANFA), 218–238 (IALN…TATI), and 249–269 (IPII…IGAL). Aspartate 306 acts as the 4-aspartylphosphate intermediate in catalysis. Residues aspartate 343, glutamate 347, 376-383 (FTAQTRMS), and lysine 394 each bind ATP. Residues aspartate 530 and aspartate 534 each contribute to the Mg(2+) site. The next 3 membrane-spanning stretches (helical) occupy residues 600–620 (FAII…LNVM), 628–648 (AILS…PLSL), and 666–686 (LVIY…LIDL).

This sequence belongs to the cation transport ATPase (P-type) (TC 3.A.3) family. Type IA subfamily. As to quaternary structure, the system is composed of three essential subunits: KdpA, KdpB and KdpC.

The protein resides in the cell inner membrane. The enzyme catalyses K(+)(out) + ATP + H2O = K(+)(in) + ADP + phosphate + H(+). In terms of biological role, part of the high-affinity ATP-driven potassium transport (or Kdp) system, which catalyzes the hydrolysis of ATP coupled with the electrogenic transport of potassium into the cytoplasm. This subunit is responsible for energy coupling to the transport system and for the release of the potassium ions to the cytoplasm. The polypeptide is Potassium-transporting ATPase ATP-binding subunit (Agrobacterium fabrum (strain C58 / ATCC 33970) (Agrobacterium tumefaciens (strain C58))).